Here is a 323-residue protein sequence, read N- to C-terminus: Mas-related G-protein coupled receptor member X1 (323 aa).

The Extracellular segment spans residues 1–30; it reads MDPTISSLSTESTTLNKTGHPSCRPILTLS. Residue asparagine 16 is glycosylated (N-linked (GlcNAc...) asparagine). Residues 31 to 51 form a helical membrane-spanning segment; the sequence is FLVPIITLLGLAGNTIVLWLL. The Cytoplasmic portion of the chain corresponds to 52-59; the sequence is GFRMRRKA. Residues 60-80 form a helical membrane-spanning segment; the sequence is ISVYVLNLSLADSFFLCCHFI. Residues 81-100 are Extracellular-facing; that stretch reads DSLMRIMNFYGIYAHKLSKE. Residues 101 to 121 traverse the membrane as a helical segment; the sequence is ILGNAAIIPYISGLSILSAIS. Residues 122–143 are Cytoplasmic-facing; the sequence is TERCLSVLWPIWYHCHRPRNMS. A helical membrane pass occupies residues 144 to 164; sequence AIICVLIWVLSFLMGILDWFF. At 165 to 180 the chain is on the extracellular side; it reads SGFLGETHHHLWKNVD. Residues 181 to 201 form a helical membrane-spanning segment; that stretch reads FIVTAFLIFLFMLLFGSSLAL. Topologically, residues 202–226 are cytoplasmic; the sequence is LVRILCGSRRKPLSRLYVTISLTVM. The helical transmembrane segment at 227–247 threads the bilayer; the sequence is VYLICGLPLGLYLFLLYWFGI. Over 248-258 the chain is Extracellular; sequence HLHYPFCHIYQ. The chain crosses the membrane as a helical span at residues 259-279; sequence VTVLLSCVNSSANPIIYFLVG. The Cytoplasmic portion of the chain corresponds to 280 to 323; that stretch reads SFRHRKKHRSLKMVLKRALEETPEEDEYTDSHVQKPTEISERRC.

This sequence belongs to the G-protein coupled receptor 1 family. Mas subfamily. Uniquely localized in a subset of small dorsal root and trigeminal sensory neurons. Associated preferentially with IB4 class of small-diameter somatosensory afferents (also known as nociceptors).

The protein resides in the cell membrane. Orphan receptor activated by neuropeptides terminating in Arg-Phe or Arg-Phe-amide. Mediates its action by association with G proteins that activate a phosphatidylinositol-calcium second messenger system. Its effect is mediated by G(q) and G(11) proteins. May regulate the function of nociceptive neurons by modulation of pain perception. The polypeptide is Mas-related G-protein coupled receptor member X1 (Mrgprx1) (Rattus norvegicus (Rat)).